The following is a 1113-amino-acid chain: Sterol regulatory element binding protein sbp-1 (1113 aa).

A transcriptional activation (acidic) region spans residues 1 to 52; it reads MNEEFEGDVPMSDPFLSLVTKLDDIAPFPNNDPLDFDMEHNWQEPGPSQQPD. Disordered regions lie at residues 24-68, 101-132, 206-274, and 290-345; these read DIAP…EYYD, LGGGRGPSLAATQQLSGEGPASMLNPLQTSPP, SPYD…SPQN, and EVER…SQGT. Basic residues predominate over residues 229 to 238; it reads PHHHHHHPMP. Positions 324-337 are enriched in acidic residues; that stretch reads AEGDEDEDDEDSDS. The segment at 355-368 is basic motif; it reads ERRTAHNLIEKKYR. Residues 355-405 enclose the bHLH domain; it reads ERRTAHNLIEKKYRCSINDRIQQLKVLLCGDEAKLSKSATLRRAIEHIEEV. The tract at residues 369–405 is helix-loop-helix motif; sequence CSINDRIQQLKVLLCGDEAKLSKSATLRRAIEHIEEV. Positions 395-422 form a coiled coil; it reads LRRAIEHIEEVEHENQVLKHHVEQMRKT. Positions 437-472 are disordered; it reads TEYSARSPVESSPSPPRNERKRSRMSTTTPMKNGTR. Transmembrane regions (helical) follow at residues 478–498 and 541–561; these read VTLFAMLLAVLIFNPIGLLAG and MSYVWVFNILMIIYVVVKLLI.

Post-translationally, processed in the Golgi apparatus, releasing the protein from the membrane. In terms of processing, ubiquitinated; the nuclear form has a rapid turnover and is rapidly ubiquitinated and degraded by the proteasome in the nucleus. In terms of tissue distribution, broadly expressed, including many cells in the head. Expressed in the intestine.

The protein localises to the nucleus. It localises to the endoplasmic reticulum membrane. In terms of biological role, transcription factor involved in maintaining normal fat levels. Regulates the expression of genes involved in lipid metabolism in response to nutrient availability, such as the fatty-acid desaturases fat-5, fat-6 and fat-7. In response to a high-glucose diet, promotes fatty acid synthesis, elongation and desaturation, acting in concert with transcription factor mxl-3. Plays a role in synthesis of monomethyl branched-chain fatty acids (mmBCFAs) as well as other very-long-chain fatty acids. Downstream of the cis-Golgi membrane protein eas-1/GOLT1B and the E3 ubiquitin ligase rnf-145/RNF145, plays a role in the regulation of glial size, perhaps by modulating synthesis of long-chain polyunsaturated fatty-acids (LC-PUFA). Modulates expression of genes in the one-carbon cycle, which produces the methyl donor S-adenosylmethionine (SAM). Probably involved in a feedback loop in which decreased levels of SAM lead to increased transcriptional activity of sbp-1, thereby causing lipid accumulation. Involved in the negative regulation of zinc homeostasis. Involved in the response to simulated microgravity, in concert with Mediator complex subunit mdt-15, probably acting in the intestine. Plays a role in transgenerational lipid accumulation in response to a high-fat diet, probably acting by upregulating wdr-5.1 expression to increase the level of trimethylated 'Lys-4' histone H3 (H3K4me3), which may then induce the expression of fat-5, fat-6 and fat-7. May act as an oxygen sensor for lipid metabolism. Its function is as follows. Precursor of the transcription factor form, which is embedded in the endoplasmic reticulum membrane. Processing of this form allows release of the transcription factor form that translocates into the nucleus and activates transcription of genes involved in sterol biosynthesis and lipid homeostasis. Key transcription factor that regulates expression of genes involved in sterol biosynthesis and lipid homeostasis. The chain is Sterol regulatory element binding protein sbp-1 from Caenorhabditis elegans.